Here is a 131-residue protein sequence, read N- to C-terminus: Small ribosomal subunit protein uS8 (131 aa).

The protein belongs to the universal ribosomal protein uS8 family. As to quaternary structure, part of the 30S ribosomal subunit. Contacts proteins S5 and S12.

Functionally, one of the primary rRNA binding proteins, it binds directly to 16S rRNA central domain where it helps coordinate assembly of the platform of the 30S subunit. The polypeptide is Small ribosomal subunit protein uS8 (Chlorobaculum tepidum (strain ATCC 49652 / DSM 12025 / NBRC 103806 / TLS) (Chlorobium tepidum)).